A 417-amino-acid chain; its full sequence is Methyltransferase/ribosomally synthesized cyclic peptide dendrothelin A precursor dbihMA (417 aa).

The tract at residues 1–251 is methyltransferase domain; that stretch reads MESSTQTKPG…GVSTFYIPPK (251 aa). Active-site residues include Arg-72, Tyr-76, and Tyr-98. Positions 98, 100, 103, 130, 172, 213, 244, and 245 each coordinate S-adenosyl-L-methionine. The interval 252–378 is clasp domain; sequence ARKDINTDII…WAIRCAMKNM (127 aa). The tract at residues 379-399 is precursor leader; the sequence is PSSLLEAASQSVEEASMNGFP. Val-401 and Val-403 each carry N-methylvaline. The residue at position 404 (Thr-404) is an N-methylthreonine. Gly-405 carries the N-methylglycine modification. Position 406 is an N-methylisoleucine (Ile-406). Val-407 carries the N-methylvaline modification. Residue Gly-408 is modified to N-methylglycine. The residue at position 410 (Ile-410) is an N-methylisoleucine. Gly-411 carries the post-translational modification N-methylglycine. Residue Val-413 is modified to N-methylvaline.

It in the N-terminal section; belongs to the precorrin methyltransferase family. As to quaternary structure, homodimer. DbiMA automethylates at Val-401, Val-403, Thr-404, Gly-405, Ile-406, Val-407, Gly-408, Ile-410, Gly-411 and Val-413 before being processed by the prolyloligopeptidase dbiP which likely forms a peptidyl ester upon removal of the follower propeptide, which then undergoes macrocyclization with the N-terminus of the modified core peptide. Peptide backbone alpha-N-methylations change the physicochemical properties of amide bonds to provide structural constraints and other favorable characteristics including biological membrane permeability to peptides.

Its pathway is mycotoxin biosynthesis. Its function is as follows. Fusion protein of the methyltransferase dbiM and the dendrothelin core peptide; part of the gene cluster that mediates the biosynthesis of dendrothelin A, a highly methylated cyclic dodecapeptide showing slight nematodicidal activity. Dendrothelin A derives from the C-terminus of the dbiMA protein, and it is the dbiMA protein that methylates its own C-terminus using S-adenosyl methionine (SAM). The C-terminus is subsequently cleaved off and macrocyclized by the prolyloligopeptidase dbiP to give the final product. This chain is Methyltransferase/ribosomally synthesized cyclic peptide dendrothelin A precursor dbihMA, found in Dendrothele bispora (strain CBS 962.96).